Here is a 65-residue protein sequence, read N- to C-terminus: Large ribosomal subunit protein bL35 (65 aa).

The interval 1–23 (MPKMKSNRGAAKRFKRTGSGKFK) is disordered. The span at 10–23 (AAKRFKRTGSGKFK) shows a compositional bias: basic residues.

It belongs to the bacterial ribosomal protein bL35 family.

This chain is Large ribosomal subunit protein bL35, found in Acidithiobacillus ferrooxidans (strain ATCC 53993 / BNL-5-31) (Leptospirillum ferrooxidans (ATCC 53993)).